The chain runs to 1804 residues: Collagen alpha-1(XI) chain (1804 aa).

The N-terminal stretch at 1–34 (MEPWSRWKTKRWIWDLTISTLVLTFLFQAREVRG) is a signal peptide. Positions 35–511 (AAPVDILKAL…SKGPTISAQE (477 aa)) are cleaved as a propeptide — N-terminal propeptide. 2 cysteine pairs are disulfide-bonded: Cys60–Cys242 and Cys181–Cys235. Positions 70-242 (DIAYRVTEEA…DYCDHYSPDC (173 aa)) constitute a Laminin G-like domain. Positions 229–417 (KAAYDYCDHY…DFTETSINGH (189 aa)) are nonhelical region. N-linked (GlcNAc...) asparagine glycosylation occurs at Asn351. Residues 418 to 506 (GAYGEKGQKG…YGGDGSKGPT (89 aa)) form a triple-helical region (interrupted) region. Positions 437–506 (LVEGPPGPAG…YGGDGSKGPT (70 aa)) are disordered. The 49-residue stretch at 440 to 488 (GPPGPAGPAGLMGPPGLQGPSGLPGDPGDRGPPGRPGLPGADGLPGPPG) folds into the Collagen-like 1 domain. Low complexity-rich tracts occupy residues 447 to 465 (PAGL…LPGD) and 477 to 494 (LPGA…LMLP). A short nonhelical segment region spans residues 507-509 (ISA). Residues 510 to 527 (QEAQAQAILQQARIALRG) form a telopeptide region. The interval 526-1560 (RGPPGPMGLT…KTRRHTESIQ (1035 aa)) is disordered. The triple-helical region stretch occupies residues 528–1540 (PPGPMGLTGR…PGPPGPPGEV (1013 aa)). 4 Collagen-like domains span residues 530-584 (GPMG…GADG), 581-639 (GADG…EIGP), 607-664 (PGDK…PGQP), and 641-698 (GLPG…GPQG). Composition is skewed to gly residues over residues 539-548 (GPVGGPGSAG) and 581-590 (GADGGRGMPG). Lys610 bears the Allysine mark. Residues 639 to 655 (PRGLPGEAGPRGLLGPR) are compositionally biased toward low complexity. Residues 697 to 708 (QGLPGPQGPIGP) are compositionally biased toward pro residues. A compositionally biased stretch (low complexity) spans 715-726 (QGKPGLAGLPGA). The Collagen-like 6 domain maps to 746 to 804 (GPPGPQGPIGYPGPRGVKGADGVRGLKGSKGEKGEDGFPGFKGDMGLKGDRGEVGQVGP). Residues 805 to 814 (RGEDGPEGPK) are compositionally biased toward basic and acidic residues. 3 stretches are compositionally biased toward low complexity: residues 873-901 (KPGP…PGPK), 916-925 (RGPQGPQGPV), and 969-979 (PQGPTGETGPI). Gly residues predominate over residues 1040–1049 (GLKGGEGPQG). The span at 1074–1083 (RPGPQGPPGP) shows a compositional bias: pro residues. Low complexity predominate over residues 1084-1108 (AGEKGAPGEKGPQGPAGRDGVQGPV). A compositionally biased stretch (gly residues) spans 1160 to 1169 (GIAGGDGEAG). Pro residues-rich tracts occupy residues 1216-1227 (MGPPGPPGPRGP) and 1341-1360 (QPGP…PGKR). Composition is skewed to low complexity over residues 1383–1392 (AEGPPGKTGP) and 1417–1426 (QGLPGAAGQD). Collagen-like domains follow at residues 1391-1449 (GPVG…SKGE), 1442-1492 (GDPG…PGPA), and 1481-1539 (GAKG…PPGE). Residues 1428-1437 (PPGPLGPPGL) are compositionally biased toward pro residues. Lys1450 is modified (allysine). The segment covering 1453 to 1462 (PGLIGLIGPP) has biased composition (low complexity). A compositionally biased stretch (gly residues) spans 1481-1490 (GAKGDGGIPG). The span at 1491-1507 (PAGPIGPPGPPGLPGPA) shows a compositional bias: pro residues. Over residues 1509 to 1519 (PKGNKGSSGPT) the composition is skewed to low complexity. The segment covering 1528-1537 (PGPPGPPGPP) has biased composition (pro residues). Residues 1541-1561 (IQPLPILSPKKTRRHTESIQA) form a nonhelical region (C-terminal) region. A propeptide spans 1562-1804 (DAGDNILDYS…FEVGPACFLG (243 aa)) (C-terminal propeptide). A Fibrillar collagen NC1 domain is found at 1575–1803 (EEIFGSLNSL…GFEVGPACFL (229 aa)). A disulfide bond links Cys1605 and Cys1637. Positions 1623, 1625, 1626, 1628, and 1631 each coordinate Ca(2+). Asn1638 and Asn1707 each carry an N-linked (GlcNAc...) asparagine glycan. 2 disulfides stabilise this stretch: Cys1646–Cys1801 and Cys1712–Cys1755.

It belongs to the fibrillar collagen family. Trimers composed of three different chains: alpha 1(XI), alpha 2(XI), and alpha 3(XI). Alpha 3(XI) is probably a post-translational modification of alpha 1(II). In terms of processing, prolines at the third position of the tripeptide repeating unit (G-X-Y) are hydroxylated in some or all of the chains. N-glycosylated.

It is found in the secreted. The protein localises to the extracellular space. Its subcellular location is the extracellular matrix. May play an important role in fibrillogenesis by controlling lateral growth of collagen II fibrils. The chain is Collagen alpha-1(XI) chain (Col11a1) from Rattus norvegicus (Rat).